Reading from the N-terminus, the 150-residue chain is Macrodomain Ter protein (150 aa).

The protein belongs to the MatP family. In terms of assembly, homodimer.

It localises to the cytoplasm. Required for spatial organization of the terminus region of the chromosome (Ter macrodomain) during the cell cycle. Prevents early segregation of duplicated Ter macrodomains during cell division. Binds specifically to matS, which is a 13 bp signature motif repeated within the Ter macrodomain. The protein is Macrodomain Ter protein of Escherichia coli O81 (strain ED1a).